Reading from the N-terminus, the 323-residue chain is Peroxisomal and mitochondrial division factor 2 (323 aa).

Disordered regions lie at residues 1–55 (MAEE…NDAI), 73–92 (ESKA…KSDE), and 120–143 (TART…SQKG). Residues 1–297 (MAEERSLNGE…WSPNVTAVGS (297 aa)) lie on the Cytoplasmic side of the membrane. The span at 13–26 (GQDDESFFDSDQQG) shows a compositional bias: acidic residues. Residues 28-278 (DGKSTELNQK…INGLKNVVEE (251 aa)) adopt a coiled-coil conformation. The helical transmembrane segment at 298–318 (GGAVAAVAVAVAGAAVVCYIY) threads the bilayer. The Mitochondrial intermembrane portion of the chain corresponds to 319–323 (HSRRV).

As to quaternary structure, homodimer. Interacts with PMD1.

Its subcellular location is the mitochondrion outer membrane. In terms of biological role, involved in morphogenesis and proliferation of mitochondria. Does not act redundantly with PMD1. Is not involved in peroxisomal proliferation. The sequence is that of Peroxisomal and mitochondrial division factor 2 from Arabidopsis thaliana (Mouse-ear cress).